We begin with the raw amino-acid sequence, 356 residues long: Serendipity locus protein beta (356 aa).

Residues 171-193 (IPCHICGEMFSSQEVLERHIKAD) form a C2H2-type 1; degenerate zinc finger. 5 C2H2-type zinc fingers span residues 201 to 223 (ATCNVCGLKVKDDEVLDLHMNLH), 229 to 251 (LECRYCDKKFSHKRNVLRHMEVH), 257 to 279 (YQCDKCGERFSLSWLMYNHLMRH), 286 to 308 (LICEVCHQQFKTKRTYKHHLRTH), and 315 to 337 (YPCPDCEKSFVDKYTLKVHKRVH).

Binds chromatin; requires N-terminal regions to form protein-protein contacts, in addition to DNA specific recognition by the zinc fingers.

The protein localises to the nucleus. In terms of biological role, binds to the consensus DNA sequence 5'-YCAGAGATGCGCA-3'. In Drosophila melanogaster (Fruit fly), this protein is Serendipity locus protein beta (Sry-beta).